Here is a 70-residue protein sequence, read N- to C-terminus: uncharacterized protein (70 aa).

Helical transmembrane passes span 13–33 (YYAF…LLGF) and 39–59 (QTYA…GLII).

It localises to the cell membrane. This is an uncharacterized protein from Escherichia coli O6:H1 (strain CFT073 / ATCC 700928 / UPEC).